A 312-amino-acid polypeptide reads, in one-letter code: NAD(P)(+)--arginine ADP-ribosyltransferase 1 (312 aa).

The N-terminal stretch at 1 to 20 is a signal peptide; that stretch reads MELLALRWVLLAGTLLSTSA. The propeptide occupies 21 to 31; that stretch reads ASSALQEGDLG. 2 disulfides stabilise this stretch: cysteine 51/cysteine 260 and cysteine 159/cysteine 208. The region spanning 71-256 is the TR mART core domain; the sequence is IAYAVTWRQA…IQLHSKGKMS (186 aa). NAD(+) contacts are provided by tyrosine 108, arginine 164, and glutamine 183. The active site involves arginine 164. Residue serine 186 is part of the active site. Residue serine 217 participates in NAD(+) binding. The active site involves glutamate 224. Positions 267–312 are excised as a propeptide; that stretch reads GGQWGRGHQEVGLGLSPGLSLPVLPCRRRVWEGLGHREGDPIPAAV.

Belongs to the Arg-specific ADP-ribosyltransferase family.

It is found in the secreted. The protein localises to the extracellular space. The enzyme catalyses L-arginyl-[protein] + NAD(+) = N(omega)-(ADP-D-ribosyl)-L-arginyl-[protein] + nicotinamide + H(+). In Gallus gallus (Chicken), this protein is NAD(P)(+)--arginine ADP-ribosyltransferase 1.